We begin with the raw amino-acid sequence, 163 residues long: Endoribonuclease YbeY (163 aa).

Zn(2+) is bound by residues His-123, His-127, and His-133.

The protein belongs to the endoribonuclease YbeY family. Requires Zn(2+) as cofactor.

It localises to the cytoplasm. Its function is as follows. Single strand-specific metallo-endoribonuclease involved in late-stage 70S ribosome quality control and in maturation of the 3' terminus of the 16S rRNA. This chain is Endoribonuclease YbeY, found in Helicobacter hepaticus (strain ATCC 51449 / 3B1).